The sequence spans 813 residues: Lon protease (813 aa).

A Lon N-terminal domain is found at 14–207 (LPLLPLRGII…ILTEILAREM (194 aa)). 359 to 366 (GPPGVGKT) lines the ATP pocket. Residues 595 to 776 (ESQVGVATGL…DQVIREALLE (182 aa)) form the Lon proteolytic domain. Catalysis depends on residues S682 and K725.

The protein belongs to the peptidase S16 family. In terms of assembly, homohexamer. Organized in a ring with a central cavity.

It localises to the cytoplasm. The catalysed reaction is Hydrolysis of proteins in presence of ATP.. Its function is as follows. ATP-dependent serine protease that mediates the selective degradation of mutant and abnormal proteins as well as certain short-lived regulatory proteins. Required for cellular homeostasis and for survival from DNA damage and developmental changes induced by stress. Degrades polypeptides processively to yield small peptide fragments that are 5 to 10 amino acids long. Binds to DNA in a double-stranded, site-specific manner. The protein is Lon protease of Heliobacterium modesticaldum (strain ATCC 51547 / Ice1).